The sequence spans 537 residues: Beta-galactoside alpha-2,6-sialyltransferase 2 (537 aa).

Over 1–10 (MKSWVRQGRR) the chain is Cytoplasmic. Residues 11–31 (LVLVGMLAWVLLFLALLSYFL) form a helical; Signal-anchor for type II membrane protein membrane-spanning segment. Residues 32–537 (DARVNEPLTS…PGFSTVDCDI (506 aa)) lie on the Lumenal side of the membrane. Disordered stretches follow at residues 83–117 (TRDE…PEGI) and 134–202 (GTEN…GDSS). Over residues 134-145 (GTENIGSQSDPV) the composition is skewed to polar residues. Residues 166 to 185 (EEEEEEEEEEERQENEDEDV) show a composition bias toward acidic residues. Cystine bridges form between Cys-265-Cys-535, Cys-312-Cys-464, and Cys-482-Cys-493. 2 N-linked (GlcNAc...) asparagine glycosylation sites follow: Asn-353 and Asn-373.

Belongs to the glycosyltransferase 29 family.

The protein resides in the golgi apparatus. The protein localises to the golgi stack membrane. It carries out the reaction a beta-D-galactoside + CMP-N-acetyl-beta-neuraminate = an N-acetyl-alpha-neuraminyl-(2-&gt;6)-beta-D-galactosyl derivative + CMP + H(+). Transfers sialic acid from the donor of substrate CMP-sialic acid to galactose containing acceptor substrates. The sequence is that of Beta-galactoside alpha-2,6-sialyltransferase 2 (st6gal2) from Takifugu rubripes (Japanese pufferfish).